The sequence spans 60 residues: U-actitoxin-Avd12b (60 aa).

The first 6 residues, 1–6 (SKEGMS), serve as a signal peptide directing secretion. The propeptide occupies 7–12 (YEEPEN). Residues 14–56 (EGVACTGQYAESFCLNGGTCRYIQSIGEYYCICVGDYTGHRCE) form the EGF-like domain. 3 disulfides stabilise this stretch: Cys18-Cys33, Cys27-Cys44, and Cys46-Cys55.

Belongs to the EGF domain peptide family.

Its subcellular location is the secreted. It is found in the nematocyst. In terms of biological role, has both toxic and EGF activity. Its EGF activity consists of rounding cells (morphological change) and inducing tyrosine phosphorylation of the EGFR in A431 cells, but with a lower potency that human EGF. The polypeptide is U-actitoxin-Avd12b (Anemonia viridis (Snakelocks anemone)).